The following is a 365-amino-acid chain: Succinyl-diaminopimelate desuccinylase (365 aa).

A Zn(2+)-binding site is contributed by His64. Asp66 is a catalytic residue. Asp95 is a binding site for Zn(2+). Glu125 serves as the catalytic Proton acceptor. Residues Glu126, Glu154, and His339 each coordinate Zn(2+).

It belongs to the peptidase M20A family. DapE subfamily. Homodimer. It depends on Zn(2+) as a cofactor. Requires Co(2+) as cofactor.

The catalysed reaction is N-succinyl-(2S,6S)-2,6-diaminopimelate + H2O = (2S,6S)-2,6-diaminopimelate + succinate. It functions in the pathway amino-acid biosynthesis; L-lysine biosynthesis via DAP pathway; LL-2,6-diaminopimelate from (S)-tetrahydrodipicolinate (succinylase route): step 3/3. In terms of biological role, catalyzes the hydrolysis of N-succinyl-L,L-diaminopimelic acid (SDAP), forming succinate and LL-2,6-diaminopimelate (DAP), an intermediate involved in the bacterial biosynthesis of lysine and meso-diaminopimelic acid, an essential component of bacterial cell walls. This chain is Succinyl-diaminopimelate desuccinylase, found in Campylobacter fetus subsp. fetus (strain 82-40).